The chain runs to 129 residues: Serum amyloid A-2 protein (129 aa).

An N-terminal signal peptide occupies residues 1–18 (MKLFTGLIFCSLVLGVSS). The residue at position 19 (Gln19) is a Pyrrolidone carboxylic acid. The segment at 92 to 129 (GDSGHGVEDSKADQAANEWGRSGKDPNHFRPSGLPDKY) is disordered.

The protein belongs to the SAA family. In terms of assembly, apolipoprotein of the HDL complex. As to expression, expressed by the liver; secreted in plasma.

The protein resides in the secreted. Major acute phase reactant. The sequence is that of Serum amyloid A-2 protein (SAA2P0DJI9) from Neovison vison (American mink).